Here is a 171-residue protein sequence, read N- to C-terminus: Tetratricopeptide repeat protein 9C (171 aa).

TPR repeat units lie at residues 8-41 (AQLYKEKGNQCYREGKYRDAVSGYHRALLQLRGL), 72-107 (TDCYNNLAACLLQMEPVNYERVKEYSQKVLERQPDN), and 108-141 (AKALYRAGVAFFHLQDYDQARHYLMAAVNRKPKD).

It belongs to the TTC9 family.

The chain is Tetratricopeptide repeat protein 9C (TTC9C) from Bos taurus (Bovine).